We begin with the raw amino-acid sequence, 30 residues long: Cyclotide mden-E (30 aa).

The segment at residues 1–30 is a cross-link (cyclopeptide (Gly-Asn)); the sequence is GIPCGESCVYIPCITAAIGCSCKSKVCYRN. Cystine bridges form between C4–C20, C8–C22, and C13–C27.

The protein belongs to the cyclotide family. Bracelet subfamily. This is a cyclic peptide.

Functionally, probably participates in a plant defense mechanism. The protein is Cyclotide mden-E of Melicytus dentatus (Tree violet).